The sequence spans 345 residues: Src kinase-associated phosphoprotein 1 (345 aa).

The 104-residue stretch at 109–212 (KIFKQGYLER…WVEQIQFLVK (104 aa)) folds into the PH domain. The segment at 226-274 (ETYDDIESTESSPVVGLTNDSENSLQEDDVYESIPGDEETEESEDENYE) is disordered. The span at 250-272 (LQEDDVYESIPGDEETEESEDEN) shows a compositional bias: acidic residues. One can recognise an SH3 domain in the interval 283-344 (FYGDYYQGLW…PKDYLTLAFD (62 aa)).

Belongs to the SKAP family. In terms of assembly, homodimer. In terms of processing, phosphorylated on tyrosines.

The protein localises to the cytoplasm. It localises to the nucleus. Its subcellular location is the cell membrane. Positively regulates T-cell receptor signaling. Required for optimal conjugation between T-cells and antigen-presenting cells. The chain is Src kinase-associated phosphoprotein 1 (skap1) from Xenopus tropicalis (Western clawed frog).